The chain runs to 420 residues: 4-hydroxy-3-methylbut-2-en-1-yl diphosphate synthase (flavodoxin) (420 aa).

[4Fe-4S] cluster contacts are provided by Cys307, Cys310, Cys353, and Glu360.

Belongs to the IspG family. [4Fe-4S] cluster serves as cofactor.

It catalyses the reaction (2E)-4-hydroxy-3-methylbut-2-enyl diphosphate + oxidized [flavodoxin] + H2O + 2 H(+) = 2-C-methyl-D-erythritol 2,4-cyclic diphosphate + reduced [flavodoxin]. The protein operates within isoprenoid biosynthesis; isopentenyl diphosphate biosynthesis via DXP pathway; isopentenyl diphosphate from 1-deoxy-D-xylulose 5-phosphate: step 5/6. Converts 2C-methyl-D-erythritol 2,4-cyclodiphosphate (ME-2,4cPP) into 1-hydroxy-2-methyl-2-(E)-butenyl 4-diphosphate. This is 4-hydroxy-3-methylbut-2-en-1-yl diphosphate synthase (flavodoxin) from Brucella melitensis biotype 2 (strain ATCC 23457).